Reading from the N-terminus, the 431-residue chain is Enolase (431 aa).

Residue Gln-168 participates in (2R)-2-phosphoglycerate binding. The active-site Proton donor is the Glu-210. The Mg(2+) site is built by Asp-247, Glu-291, and Asp-318. 4 residues coordinate (2R)-2-phosphoglycerate: Lys-343, Arg-372, Ser-373, and Lys-394. The active-site Proton acceptor is Lys-343.

It belongs to the enolase family. Component of the RNA degradosome, a multiprotein complex involved in RNA processing and mRNA degradation. The cofactor is Mg(2+).

The protein resides in the cytoplasm. It is found in the secreted. Its subcellular location is the cell surface. It catalyses the reaction (2R)-2-phosphoglycerate = phosphoenolpyruvate + H2O. It functions in the pathway carbohydrate degradation; glycolysis; pyruvate from D-glyceraldehyde 3-phosphate: step 4/5. Its function is as follows. Catalyzes the reversible conversion of 2-phosphoglycerate (2-PG) into phosphoenolpyruvate (PEP). It is essential for the degradation of carbohydrates via glycolysis. This chain is Enolase, found in Acinetobacter baumannii (strain AYE).